The following is a 546-amino-acid chain: Thermolysin (546 aa).

An N-terminal signal peptide occupies residues 1–25 (MDKRAMLGAIGLAFGLMAWPFGASA). Positions 26–228 (KEKSMVWNEQ…EAKPGGGQPV (203 aa)) are cleaved as a propeptide — activation peptide. Residues Asp-287, Asp-289, Gln-291, and Asp-368 each contribute to the Ca(2+) site. Position 372 (His-372) interacts with Zn(2+). The active site involves Glu-373. Positions 376 and 396 each coordinate Zn(2+). 8 residues coordinate Ca(2+): Asn-413, Asp-415, Glu-417, Glu-420, Tyr-423, Thr-424, Ile-427, and Asp-430. His-461 (proton donor) is an active-site residue.

The protein belongs to the peptidase M4 family. The cofactor is Ca(2+). Requires Zn(2+) as cofactor.

It localises to the secreted. It carries out the reaction Preferential cleavage: Xaa-|-Leu &gt; Xaa-|-Phe.. Extracellular zinc metalloprotease. Has collagenase activity. The protein is Thermolysin (npr) of Bacillus sp. (strain EA1).